The sequence spans 227 residues: 2,3-bisphosphoglycerate-dependent phosphoglycerate mutase (227 aa).

Substrate-binding positions include 7–14 (RHGFSEWN), 20–21 (TG), R59, 86–89 (ERHY), K97, 113–114 (RR), and 182–183 (GN). The active-site Tele-phosphohistidine intermediate is H8. The active-site Proton donor/acceptor is the E86.

The protein belongs to the phosphoglycerate mutase family. BPG-dependent PGAM subfamily. In terms of assembly, homodimer.

It catalyses the reaction (2R)-2-phosphoglycerate = (2R)-3-phosphoglycerate. It participates in carbohydrate degradation; glycolysis; pyruvate from D-glyceraldehyde 3-phosphate: step 3/5. Functionally, catalyzes the interconversion of 2-phosphoglycerate and 3-phosphoglycerate. This is 2,3-bisphosphoglycerate-dependent phosphoglycerate mutase from Haemophilus influenzae (strain PittGG).